Consider the following 259-residue polypeptide: MRKLWFLPILLGAVGGVSLYAIAQQENPAEEVKKQKELLLKEMGILPGDVYAEQGRDMFNKPMGNAGKSCSSCHGQDGRYLRGAYAHMPRYYKDMDAVADLDTRIKYCMEKYMGVGNVKHDLNFKSIATYVATLSNGMKMDVKLTHPKEREMYEKGRELWYARVGKMDFSCAICHDTFGGQRIRLQTLAKVKEDKVATHWPAYRFSNDQLWTMEDRIRGCYNQIRVTPPPHFSWPQIALSLYMAYESKGGTIETPGFVR.

A signal peptide spans 1-23 (MRKLWFLPILLGAVGGVSLYAIA). In terms of domain architecture, Cytochrome c spans 50 to 135 (VYAEQGRDMF…SIATYVATLS (86 aa)). Heme c-binding residues include cysteine 70, cysteine 73, histidine 74, cysteine 108, cysteine 171, cysteine 174, and histidine 175. Residue arginine 216 participates in substrate binding. Cysteine 220 lines the heme c pocket. Cysteine 220 acts as the Cysteine persulfide intermediate in catalysis.

Belongs to the SoxA family. Heterodimer of SoxA and SoxX. Heme c is required as a cofactor. Cysteine persulfide at Cys-220.

The protein localises to the periplasm. The enzyme catalyses L-cysteinyl-[SoxY protein] + thiosulfate + 2 Fe(III)-[cytochrome c] = S-sulfosulfanyl-L-cysteinyl-[SoxY protein] + 2 Fe(II)-[cytochrome c] + 2 H(+). It catalyses the reaction S-sulfanyl-L-cysteinyl-[SoxY protein] + thiosulfate + 2 Fe(III)-[cytochrome c] = S-(2-sulfodisulfanyl)-L-cysteinyl-[SoxY protein] + 2 Fe(II)-[cytochrome c] + 2 H(+). In terms of biological role, C-type diheme cytochrome, which is part of the SoxAX cytochrome complex involved in sulfur oxidation. The SoxAX complex catalyzes the formation of a heterodisulfide bond between the conserved cysteine residue on a sulfur carrier SoxYZ complex subunit SoxY and thiosulfate or other inorganic sulfur substrates. This leads to the liberation of two electrons, which may be transferred from the SoxAX complex to another cytochrome c that then channels them into the respiratory electron transport chain. Some electrons may be used for reductive CO(2) fixation. This Hydrogenobacter thermophilus (strain DSM 6534 / IAM 12695 / TK-6) protein is L-cysteine S-thiosulfotransferase subunit SoxA.